Reading from the N-terminus, the 398-residue chain is Succinate--CoA ligase [ADP-forming] subunit beta (398 aa).

Residues 9-254 enclose the ATP-grasp domain; sequence KALLKSFGAP…KTEEDAKEIE (246 aa). ATP is bound by residues Lys46, 53–55, Glu109, Ala112, and Glu117; that span reads GRG. Residues Asn209 and Asp223 each contribute to the Mg(2+) site. Residues Asn274 and 331 to 333 each bind substrate; that span reads GIM.

It belongs to the succinate/malate CoA ligase beta subunit family. As to quaternary structure, heterotetramer of two alpha and two beta subunits. Requires Mg(2+) as cofactor.

It catalyses the reaction succinate + ATP + CoA = succinyl-CoA + ADP + phosphate. It carries out the reaction GTP + succinate + CoA = succinyl-CoA + GDP + phosphate. The protein operates within carbohydrate metabolism; tricarboxylic acid cycle; succinate from succinyl-CoA (ligase route): step 1/1. Its function is as follows. Succinyl-CoA synthetase functions in the citric acid cycle (TCA), coupling the hydrolysis of succinyl-CoA to the synthesis of either ATP or GTP and thus represents the only step of substrate-level phosphorylation in the TCA. The beta subunit provides nucleotide specificity of the enzyme and binds the substrate succinate, while the binding sites for coenzyme A and phosphate are found in the alpha subunit. This chain is Succinate--CoA ligase [ADP-forming] subunit beta, found in Allorhizobium ampelinum (strain ATCC BAA-846 / DSM 112012 / S4) (Agrobacterium vitis (strain S4)).